The sequence spans 859 residues: Leucine--tRNA ligase (859 aa).

The 'HIGH' region signature appears at 42-52 (PYPSGRLHMGH). The 'KMSKS' region signature appears at 618–622 (KMSKS). An ATP-binding site is contributed by lysine 621.

This sequence belongs to the class-I aminoacyl-tRNA synthetase family.

It is found in the cytoplasm. It carries out the reaction tRNA(Leu) + L-leucine + ATP = L-leucyl-tRNA(Leu) + AMP + diphosphate. In Shewanella sp. (strain MR-7), this protein is Leucine--tRNA ligase.